The sequence spans 736 residues: Elongation factor 2 (736 aa).

The 244-residue stretch at 18 to 261 (EQVRNIGITA…MVVKFIPNPR (244 aa)) folds into the tr-type G domain. GTP-binding positions include 27–34 (AHVDHGKT), 93–97 (DTPGH), and 147–150 (NKVD). Diphthamide is present on H602.

This sequence belongs to the TRAFAC class translation factor GTPase superfamily. Classic translation factor GTPase family. EF-G/EF-2 subfamily.

Its subcellular location is the cytoplasm. Its function is as follows. Catalyzes the GTP-dependent ribosomal translocation step during translation elongation. During this step, the ribosome changes from the pre-translocational (PRE) to the post-translocational (POST) state as the newly formed A-site-bound peptidyl-tRNA and P-site-bound deacylated tRNA move to the P and E sites, respectively. Catalyzes the coordinated movement of the two tRNA molecules, the mRNA and conformational changes in the ribosome. The protein is Elongation factor 2 of Staphylothermus marinus (strain ATCC 43588 / DSM 3639 / JCM 9404 / F1).